The following is a 426-amino-acid chain: Histidine--tRNA ligase (426 aa).

The protein belongs to the class-II aminoacyl-tRNA synthetase family. In terms of assembly, homodimer.

It localises to the cytoplasm. The enzyme catalyses tRNA(His) + L-histidine + ATP = L-histidyl-tRNA(His) + AMP + diphosphate + H(+). In Streptococcus gordonii (strain Challis / ATCC 35105 / BCRC 15272 / CH1 / DL1 / V288), this protein is Histidine--tRNA ligase.